The sequence spans 677 residues: Protein hook (677 aa).

A Calponin-homology (CH) domain is found at 6 to 123 (NEMYYSLLEW…RLLQLVLGCA (118 aa)). Coiled-coil stretches lie at residues 135–436 (EIMC…KCGH) and 478–588 (QTAL…AKEV).

The protein belongs to the hook family. As to quaternary structure, homodimer. Interacts with microtubules via its N-terminus.

The protein localises to the cytoplasm. Its subcellular location is the cytoskeleton. It is found in the endosome. It localises to the synapse. Its function is as follows. Involved in endocytic trafficking by stabilizing organelles of the endocytic pathway. Probably acts as a cytoskeletal linker protein required to tether endosome vesicles to the cytoskeleton. Involved in modulation of endocytosis at stages required for down-regulation of membrane proteins that control synapse size. Not involved in synaptic vesicle recycling. Required in R7 cells for boss endocytosis into multivesicular bodies (MVBs). Has a role in regulating adult longevity. This is Protein hook from Drosophila pseudoobscura pseudoobscura (Fruit fly).